Consider the following 24-residue polypeptide: Calcium-binding shell glycoprotein P50 (24 aa).

The disordered stretch occupies residues 1–24; that stretch reads KDALEHTGFAPKKDGEEHVEWNYN.

Post-translationally, glycosylated. As to expression, nacreous and prismatic layers of the shell.

Functionally, calcium-binding. The polypeptide is Calcium-binding shell glycoprotein P50 (Unio pictorum (Painter's mussel)).